We begin with the raw amino-acid sequence, 349 residues long: Aminomethyltransferase (349 aa).

It belongs to the GcvT family. As to quaternary structure, the glycine cleavage system is composed of four proteins: P, T, L and H.

It catalyses the reaction N(6)-[(R)-S(8)-aminomethyldihydrolipoyl]-L-lysyl-[protein] + (6S)-5,6,7,8-tetrahydrofolate = N(6)-[(R)-dihydrolipoyl]-L-lysyl-[protein] + (6R)-5,10-methylene-5,6,7,8-tetrahydrofolate + NH4(+). In terms of biological role, the glycine cleavage system catalyzes the degradation of glycine. The chain is Aminomethyltransferase from Thermus thermophilus (strain ATCC 27634 / DSM 579 / HB8).